Here is a 32-residue protein sequence, read N- to C-terminus: ilv operon leader peptide (32 aa).

This is ilv operon leader peptide (ilvL) from Escherichia coli O157:H7.